We begin with the raw amino-acid sequence, 151 residues long: UPF0561 protein C2orf68 homolog (151 aa).

Residues Met-1–Gly-89 are disordered. 2 stretches are compositionally biased toward basic and acidic residues: residues Leu-32 to Glu-46 and Arg-70 to Pro-85.

This sequence belongs to the UPF0561 family.

This is UPF0561 protein C2orf68 homolog from Xenopus laevis (African clawed frog).